A 407-amino-acid chain; its full sequence is MSKINKVVLAYSGGLDTSVIVKWLQDTYDCEVVTFTADIGQGEEVEPARAKAEAMGVKEIYIEDLREEFVRDYVFPMFRANAIYEGEYLLGTSIARPLIAKRLVEIAEETGADAISHGATGKGNDQVRFELGAYALAPGIQVIAPWREWDLNSREKLMAYCEERNIPVDFSNKKKKSPYSMDANLLHISYEGGNLEDPWWEAEEDMWRWSVSPEAAPDQATYITLGFEKGDIVSIDGETLSPADVLTKLNKLGGDNGIGRLDIVENRYVGMKSRGCYETPGGTIMLPAHRAIESLTLDRESAHLKDSVMPKYAELLYNGYWWSPERLALQKLIDATQEHVNGEVRLKLYKGSVTVVGRRSDNDSLFDASIATFEDDAGAYDQKDAEGFIKLNALRLRIAAKTGRKLS.

ATP-binding positions include 10–18 and Ala-37; that span reads AYSGGLDTS. The L-citrulline site is built by Tyr-88 and Ser-93. ATP is bound at residue Gly-118. Residues Thr-120, Asn-124, and Asp-125 each coordinate L-aspartate. Asn-124 provides a ligand contact to L-citrulline. Residues Arg-128, Ser-180, Ser-189, Glu-265, and Tyr-277 each coordinate L-citrulline.

The protein belongs to the argininosuccinate synthase family. Type 1 subfamily. Homotetramer.

The protein resides in the cytoplasm. The catalysed reaction is L-citrulline + L-aspartate + ATP = 2-(N(omega)-L-arginino)succinate + AMP + diphosphate + H(+). Its pathway is amino-acid biosynthesis; L-arginine biosynthesis; L-arginine from L-ornithine and carbamoyl phosphate: step 2/3. The polypeptide is Argininosuccinate synthase (Alcanivorax borkumensis (strain ATCC 700651 / DSM 11573 / NCIMB 13689 / SK2)).